The following is a 264-amino-acid chain: SPARC (264 aa).

An N-terminal signal peptide occupies residues 1–16 (MRYALAACLLLLAASS). Positions 52–74 (PCEDHQCGWGKECVVGKKGEPTC) constitute a Follistatin-like domain. Disulfide bonds link C53/C64, C58/C74, C76/C110, C80/C103, C92/C135, C141/C228, and C236/C252. The region spanning 68–137 (KKGEPTCECI…HLEYLGECKK (70 aa)) is the Kazal-like domain. The N-linked (GlcNAc...) asparagine glycan is linked to N96. Residues 224 to 259 (PMESCIKPFLEGCDANNDGNISIKEWGKCLGLKEGE) enclose the EF-hand domain. Ca(2+) contacts are provided by D237, N239, D241, N243, and E248. The N-linked (GlcNAc...) asparagine glycan is linked to N243.

This sequence belongs to the SPARC family. In terms of tissue distribution, expressed by body wall and sex muscle cells. Probable association with basement membranes.

Its subcellular location is the secreted. The protein localises to the extracellular space. It localises to the extracellular matrix. The protein resides in the basement membrane. Its function is as follows. Has a high affinity for collagen. Affects nematode body morphology and mobility. Essential for C.elegans development and muscle function. The cysteine-rich region could have protease inhibitory activity or may provide the framework for a protein binding module. Probable role in skeletal morphogenesis. In Caenorhabditis elegans, this protein is SPARC (ost-1).